The chain runs to 253 residues: Tetraspanin-11 (253 aa).

A run of 4 helical transmembrane segments spans residues 19 to 39 (LLFI…AVGV), 63 to 83 (ILIF…GAVI), 90 to 110 (LSAY…AGVL), and 220 to 240 (LLLM…GMIL).

It belongs to the tetraspanin (TM4SF) family.

The protein localises to the membrane. The chain is Tetraspanin-11 (TSPAN11) from Bos taurus (Bovine).